The primary structure comprises 334 residues: Protein-methionine-sulfoxide reductase catalytic subunit MsrP (334 aa).

The segment at residues 1–44 (MKKNQFLKESDVTAESVFFMKRRQVLKALGISATALSLPHAAHA) is a signal peptide (tat-type signal). Residues Asn-88, 91-92 (YE), Cys-146, Thr-181, Asn-233, Arg-238, and 249-251 (GIK) contribute to the Mo-molybdopterin site.

It belongs to the MsrP family. As to quaternary structure, heterodimer of a catalytic subunit (MsrP) and a heme-binding subunit (MsrQ). It depends on Mo-molybdopterin as a cofactor. Predicted to be exported by the Tat system. The position of the signal peptide cleavage has not been experimentally proven.

The protein resides in the periplasm. It catalyses the reaction L-methionyl-[protein] + a quinone + H2O = L-methionyl-(S)-S-oxide-[protein] + a quinol. The catalysed reaction is L-methionyl-[protein] + a quinone + H2O = L-methionyl-(R)-S-oxide-[protein] + a quinol. Its function is as follows. Part of the MsrPQ system that repairs oxidized periplasmic proteins containing methionine sulfoxide residues (Met-O), using respiratory chain electrons. Thus protects these proteins from oxidative-stress damage caused by reactive species of oxygen and chlorine generated by the host defense mechanisms. MsrPQ is essential for the maintenance of envelope integrity under bleach stress, rescuing a wide series of structurally unrelated periplasmic proteins from methionine oxidation, including the primary periplasmic chaperone SurA and the lipoprotein Pal. The catalytic subunit MsrP is non-stereospecific, being able to reduce both (R-) and (S-) diastereoisomers of methionine sulfoxide. This is Protein-methionine-sulfoxide reductase catalytic subunit MsrP from Escherichia coli (strain K12 / MC4100 / BW2952).